The primary structure comprises 109 residues: Hainantoxin-XVIII-4 (109 aa).

A signal peptide spans 1 to 18 (MKLSIIIIATSLVIAVVA). The propeptide occupies 19–46 (FPSKDSKAIENDKTEQRMEIVVQETARA). 3 disulfide bridges follow: C55–C68, C59–C108, and C61–C81.

It belongs to the neurotoxin 25 family. F7 subfamily. In terms of tissue distribution, expressed by the venom gland.

The protein localises to the secreted. Its function is as follows. Putative ion channel inhibitor. The polypeptide is Hainantoxin-XVIII-4 (Cyriopagopus hainanus (Chinese bird spider)).